The sequence spans 1763 residues: MSQTLSFVLKTHSVRKDFVHSVKVTLARRRDLQYLYNKLARTMRAEACPSCSSYDVCPNCTSSDIPDNGSSTTSIPSWEDVTKTSTYSLLLSEDTSDELCPDDLVNVAAHIRKALSTQAHPANTEMCKEQLTSLLVMAEAMLPQRSRASIPLHQQHQAARLEWREKFFSKPLDFLLERIGVSKDILQITAIWKIILEKACYCKSYGEQWFCAAKQKLREMRTFESDTLKPLVGAFIDGLRFMTVDNPNPMGFLPKLIGLVKPLNLAMIIDNHENTLSGWVVTLTAIMELYNITECTIDVITSLVTGFYDKISKATKFFSQVKALFTGFRSEDVANSFWYMAAAILCYLITGLIPNNGRFSKIKACLSGATTLVSGIIATQKLAAMFATWNSESIVNELSARTVAISELNNPTTTSDTDSVERLLELAKILHEEIKVHTLNPIMQSYNPILRNLMSTLDGVITSCNKRKAIARKRQVPVCYILTGPPGCGKTTAAQALAKKLSDQEPSVINLDVDHHDTYTGNEVCIIDEFDSSDKVDYANFVIGMVNSAPMVLNCDMLENKGKLFTSKYIIMTSNSETPVKPSSKRAGAFYRRVTIIDVTNPLVESHKRARPGTSVPRSCYKKNFSHLSLAKRGAECWCKEYVLDPKGLQHQTIKAPPPTFLNIDSLAQTMKQDFVLKNMAFEAEDGCSEHRYGFICQQSEVETVRRLLNAIRARLNATFTVCVGPEASHSIGCTAHVLTPDEPFNGRRFIVSRCNEASLAALEGNCVQSALGVCMSNKDLTHLCHFIRGKIVNDSVRLDELPANQHVVTVNSVFDLAWALRRHLTLTGQFQAIRAAYDVLTVPDKVPAMLRHWMDETSFSDEHVVTQFVTPGGVVILESCGGARIWALGHNVIRAGGVTATPTGGCVRLVGLSAQTLPWSEIFRELFTLLGRIWSSIKVSTLVLTALGMYASRFRPKSEAKGKTKSKIGPYRGRGVALTDDEYDEWREHNANRKLDLSVEDFLMLRHRAALGADDADAVKFRSWWNSRTRPGDGFEDVTVIGKGGVKHEKIRTSTLRAVDRGYDVSFAEESGPGTKFHKNAIGSVTDVCGEHKGYCVHMGHGVYASVAHVVKGDSYFLGERIFDVKTNGEFCCFRSTKILPSAAPFFSGKPTRDPWGSPVATEWKPKAYTTTSGKIVGCFATTSTETHPGDCGLPYIDDNGRVTGLHTGSGGPKTPSAKLVVPYIHIDMKNKSVTPQKYDETKPNISYKGLVCKQLDEIRIIPKGTRLHVSPAHVDDFEECSHQPASLGSGDPRCPKSLTAIVVDSLKPYCDRVEGPPHDVLHRVQKMLIDHLSGFVPMNISSETSMLSAFHKLNHDTSCGPYLGGRKKDHMVNGEPDKQLLDLLSSKWKLATQGIALPHEYTIGLKDELRPIEKVQEGKRRMIWGCDVGVATVCAAAFKGVSDAITANHQYGPIQVGINMDSPSVEVLYQRIKSAAKVFAVDYSKWDSTQSPRVSAASIDILRYFSDRSPIVDSAANTLKSPPIAIFNGVAVKVASGLPSGMPLTSVINSLNHCMYVGCAILQSLEARQIPVTWNLFSSFDMMTYGDDGVYMFPTMFASVSDQIFGNLSAYGLKPTRVDKSVGAIESIDPESVVFLKRTITRTPNGIRGLLDRSSIIRQFFYIKGENSDDWKTPPKTIDPTSRGQQLWNACLYASQHGVEFYNKVLKLAMRAVEYEGLHLKPPSYSSALEHYNSQFNGVEARSDQINMSDVTALHCDVFEV.

The SF3 helicase domain maps to 458-614 (DGVITSCNKR…ESHKRARPGT (157 aa)). 484-491 (GPPGCGKT) is an ATP binding site. An O-(5'-phospho-RNA)-tyrosine modification is found at Tyr-984. At Thr-1040 the chain carries Phosphothreonine. Ser-1067 carries the phosphoserine modification. The Peptidase C24 domain maps to 1073 to 1229 (GPGTKFHKNA…KLVVPYIHID (157 aa)). Catalysis depends on for 3CLpro activity residues His-1110, Glu-1131, and Cys-1193. Residues 1478-1603 (AKVFAVDYSK…MFPTMFASVS (126 aa)) enclose the RdRp catalytic domain.

As to quaternary structure, homodimer. Interacts with NTPase, protein p30 and protease-polymerase p76. Interacts with capsid protein VP1 and protease-polymerase p76. Interacts with host IEF4e; this interaction plays a role in translation of viral proteins. In terms of assembly, homooligomer. Interacts with Vpg, protein p32 and may interact with capsid protein VP1. In terms of processing, specific enzymatic cleavages in vivo yield mature proteins. Pro-Pol is first autocatalytically cleaved, then processes the whole polyprotein. VPg is uridylylated by the polymerase and is covalently attached to the 5'-end of the polyadenylated genomic and subgenomic RNAs. This uridylylated form acts as a nucleotide-peptide primer for the polymerase.

It localises to the host endoplasmic reticulum membrane. The enzyme catalyses a ribonucleoside 5'-triphosphate + H2O = a ribonucleoside 5'-diphosphate + phosphate + H(+). The catalysed reaction is RNA(n) + a ribonucleoside 5'-triphosphate = RNA(n+1) + diphosphate. It catalyses the reaction Endopeptidase with a preference for cleavage when the P1 position is occupied by Glu-|-Xaa and the P1' position is occupied by Gly-|-Yaa.. Functionally, together with NTPase and NS4, initiates the formation of the replication complex. Induces the proliferation of the host smooth ER membranes forming long tubular structures. These remodeled membranes probably form the viral factories that contain the replication complex. Displays NTPase activity, but no helicase activity. Induces the formation of convoluted membranes derived from the host ER. These remodeled membranes probably form the viral factories that contain the replication complex. Together with NS2 and NS4, initiates the formation of the replication complex. In terms of biological role, probable key protein responsible for the formation of membrane alterations by the virus. Induces the formation of convoluted membranes derived from the host ER. These remodeled membranes probably form the viral factories that contain the replication complex. Together with NS2 and NTPase, initiates the formation of the replication complex. Its function is as follows. Viral genome-linked protein is covalently linked to the 5'-end of the positive-strand, negative-strand genomic RNAs and subgenomic RNA. Acts as a genome-linked replication primer. May recruit ribosome to viral RNA thereby promoting viral proteins translation. Interacts with host translation initiation complex to allow the translation of viral proteins. Functionally, protease-polymerase p76 processes the polyprotein: Pro-Pol is first released by autocleavage, then all other proteins are cleaved. Cleaves host translation initiation factor eIF4G1, eIF4G2 and PABP1 thereby inducing a shutdown of host protein synthesis. This shutdown may not prevent viral mRNA from being translated since viral Vpg replaces the cap. Also functions as an RNA-directed RNA polymerase, which replicates genomic and antigenomic viral RNA by recognizing specific signals. Also transcribes a subgenomic mRNA by initiating RNA synthesis internally on antigenomic RNA. This sgRNA codes for structural proteins. Catalyzes the covalent attachment VPg with viral RNAs. Cleaves host G3BP1 thereby preventing the assembly of host stress granules. The chain is Genome polyprotein from Feline calicivirus (strain Japanese F4) (FCV).